Here is a 307-residue protein sequence, read N- to C-terminus: GTPase Era (307 aa).

In terms of domain architecture, Era-type G spans 7-181; that stretch reads RCGWVALLGP…VKLVKSKLPV (175 aa). A G1 region spans residues 15 to 22; it reads GPPNAGKS. Residue 15 to 22 participates in GTP binding; that stretch reads GPPNAGKS. The interval 41-45 is G2; it reads QTTRN. A G3 region spans residues 62–65; that stretch reads DTPG. GTP is bound by residues 62–66 and 130–133; these read DTPGI and NKVD. Residues 130–133 are G4; it reads NKVD. The G5 stretch occupies residues 160-162; the sequence is VSA. In terms of domain architecture, KH type-2 spans 212 to 290; sequence LRQELPYSVA…HLELWVKVRE (79 aa).

It belongs to the TRAFAC class TrmE-Era-EngA-EngB-Septin-like GTPase superfamily. Era GTPase family. In terms of assembly, monomer.

Its subcellular location is the cytoplasm. It is found in the cell inner membrane. In terms of biological role, an essential GTPase that binds both GDP and GTP, with rapid nucleotide exchange. Plays a role in 16S rRNA processing and 30S ribosomal subunit biogenesis and possibly also in cell cycle regulation and energy metabolism. This Nitratidesulfovibrio vulgaris (strain DSM 19637 / Miyazaki F) (Desulfovibrio vulgaris) protein is GTPase Era.